The primary structure comprises 383 residues: GTPase-interacting component 2 (383 aa).

The segment at 63 to 106 is disordered; it reads SNKKNIELPPLSPNSHPSCHHRRSNSNSAKSKESSSSSSSANKT. Residues 87 to 105 show a composition bias toward low complexity; the sequence is NSNSAKSKESSSSSSSANK. The CRIB domain occupies 134-147; the sequence is ISTPFDFQHISHAD. A compositionally biased stretch (polar residues) spans 155-165; that stretch reads EQLQEPSSLST. A disordered region spans residues 155-189; sequence EQLQEPSSLSTEIKDDYTSSSSKRDSKSLNKAFVT. A compositionally biased stretch (basic and acidic residues) spans 166-182; it reads EIKDDYTSSSSKRDSKS. A phosphoserine mark is found at Ser254, Ser258, Ser337, Ser345, and Ser367. Positions 319–361 are disordered; the sequence is ETPNSNKDSAKAFFPSRQSPLPKRRNSIATPSPQSKFSYSDSP. Over residues 345–361 the composition is skewed to polar residues; the sequence is SIATPSPQSKFSYSDSP.

It belongs to the BORG/CEP family. Interacts with GTP-bound CDC42.

It is found in the bud neck. The protein localises to the bud tip. It localises to the cytoplasm. Its subcellular location is the cell cortex. The protein resides in the cytoskeleton. Its function is as follows. Required for cell size and shape control, bud site selection, bud emergence, actin cytoskeletal organization, mitotic spindle orientation/positioning, and mating projection formation in response to mating pheromone. In Saccharomyces cerevisiae (strain ATCC 204508 / S288c) (Baker's yeast), this protein is GTPase-interacting component 2 (GIC2).